The primary structure comprises 144 residues: Deoxyuridine 5'-triphosphate nucleotidohydrolase (144 aa).

The dUMP site is built by S66, R133, F138, and G139.

This sequence belongs to the dUTPase family. Homotrimer. The cofactor is Mg(2+).

The enzyme catalyses dUTP + H2O = dUMP + diphosphate + H(+). It participates in pyrimidine metabolism; dUMP biosynthesis; dUMP from dCTP (dUTP route): step 2/2. Involved in nucleotide metabolism via production of dUMP, the immediate precursor of thymidine nucleotides, and decreases the intracellular concentration of dUTP so that uracil cannot be incorporated into DNA. This chain is Deoxyuridine 5'-triphosphate nucleotidohydrolase (DUT1), found in Encephalitozoon cuniculi (strain GB-M1) (Microsporidian parasite).